The primary structure comprises 645 residues: Putative bifunctional exonuclease/endonuclease protein MT2247 (645 aa).

The 164-residue stretch at 44-207 (VVVDLETTGG…DDARATVDVL (164 aa)) folds into the Exonuclease domain. Positions 248 to 326 (HRPGVYLFRG…LSTHAPPYNR (79 aa)) constitute a GIY-YIG domain. The interval 603–645 (WQSDLPTEPHPSREQLFGRTGVDCRTGPPQPLLPGRQPFSTAG) is disordered. Low complexity predominate over residues 635–645 (LPGRQPFSTAG).

This chain is Putative bifunctional exonuclease/endonuclease protein MT2247, found in Mycobacterium tuberculosis (strain CDC 1551 / Oshkosh).